Reading from the N-terminus, the 259-residue chain is TCF3 fusion partner homolog (259 aa).

Disordered stretches follow at residues 51–72 and 141–210; these read GLGD…GRRR and EDDG…APVQ. Serine 167 carries the post-translational modification Phosphoserine. Threonine 172 carries the phosphothreonine modification. Residues serine 180 and serine 188 each carry the phosphoserine modification. A Phosphothreonine modification is found at threonine 203. Lysine 222 is covalently cross-linked (Glycyl lysine isopeptide (Lys-Gly) (interchain with G-Cter in SUMO2)). The segment at 240–259 is disordered; that stretch reads VSRGPDKLLPYPTLASPPFD. Serine 255 bears the Phosphoserine mark.

Interacts with NOL3; translocates NOL3 into the nucleus and negatively regulated TFPT-induced cell death. Component of the chromatin remodeling INO80 complex; specifically part of a complex module associated with the N-terminus of INO80. As to expression, ubiquitously expressed. Abundant in the brain.

It localises to the nucleus. Its function is as follows. Appears to promote apoptosis in a p53/TP53-independent manner. Putative regulatory component of the chromatin remodeling INO80 complex which is involved in transcriptional regulation, DNA replication and probably DNA repair. The polypeptide is TCF3 fusion partner homolog (Tfpt) (Rattus norvegicus (Rat)).